Consider the following 121-residue polypeptide: Chorion protein S15 (121 aa).

Positions 1 to 18 (MKYLFVCVSLALFAYISA) are cleaved as a signal peptide.

Belongs to the chorion protein S15/S18 family.

It localises to the secreted. In terms of biological role, chorion membrane (egg shell) protein; plays a role in protecting the egg from the environment. In Drosophila subobscura (Fruit fly), this protein is Chorion protein S15 (Cp15).